A 420-amino-acid chain; its full sequence is MYNLSRIIYRFSSVSLNPSTRASGFLLENASSKILQSATNRAFSAKSGSDGVGGDDNGWNISTGGSFGGTGSADLDWDNKSMWSTGLTKEHFDGVSVGRQKNAANPSSDNTPSDSGDVMSKLGPKEVALVNEMNEYDDLLKEIEQDNRQGRAFVDGIKQRMMEISVLLKQVKEPGARGSYLKDSEKTEMYRLHKENPEVYTIERLAKDYRIMRQRVHAILFLKEDEEEEERKLGRPLDDSVDRLLDEYPEFFISHDREFHVASLNYKPDFKVMPEGWDGTIKDMDEVHYEISKKEDDMLYEEFVRRFEFNKMKWRGEVMCHKYSRRRSSEGWKITVEKLGAKGKRGAGGGWKFMSLPDGSSRPLNEMEKVYVKRETPLRRRSIISTEVMRYSPANQKRRSKRKQKRKERRIACLKAGKQT.

The N-terminal 11 residues, methionine 1 to phenylalanine 11, are a transit peptide targeting the mitochondrion. 2 disordered regions span residues arginine 99–serine 120 and arginine 390–threonine 420. Over residues asparagine 102–aspartate 114 the composition is skewed to polar residues. Positions glutamine 396–arginine 409 are enriched in basic residues.

As to quaternary structure, component of the mitochondrial ribosome small subunit. As to expression, expressed at high levels in reproductive organs and, at lower levels, ubiquitously.

The protein localises to the mitochondrion. Its function is as follows. Essential for fertility (male and female gametophyte functions and development). Required for the integrity of female gametic mitochondria. Modulates male gametophyte functions, including pollen tube growth and style penetration. Involved in mitochondrial-driven cell-to-cell communication in embryo sacs during female gametes maturation (including embryogenesis initiation and endosperm development), especially for reciprocal signaling between central and egg cells which regulates reciprocal development. The sequence is that of Small ribosomal subunit protein mS75 from Arabidopsis thaliana (Mouse-ear cress).